A 335-amino-acid chain; its full sequence is Trans-1,2-dihydrobenzene-1,2-diol dehydrogenase (335 aa).

Belongs to the Gfo/Idh/MocA family. Homodimer. As to expression, liver, lens, spleen, kidney and small intestine.

The catalysed reaction is (1R,2R)-1,2-dihydrobenzene-1,2-diol + NADP(+) = catechol + NADPH + H(+). It carries out the reaction D-xylose + NADP(+) = D-xylono-1,5-lactone + NADPH + H(+). Strongly inhibited by isoascorbic acid, 4-hydroxyacetophenone and chloromercuriphenylsulphonate. Stimulated by various salts. This is Trans-1,2-dihydrobenzene-1,2-diol dehydrogenase (DHDH) from Sus scrofa (Pig).